The following is a 961-amino-acid chain: MAEAIGCTLNCSCQCFKPGKINHRQCEQCRHGWVAHALSKLRIPPVYPTSQVEIVQSNVVFDISSLMLYGTQAIPVRLKILLDRLFSVLKQDEVLQILHALDWTLQDYIRGYVLQDASGKVLDHWSIMTSEEEVATLQQFLRFGETKSIVELMAIQEKEEQSVIVPPTTANVDIRAFIESCGHRSASLPTPVDKGSPGGMHPFENLISNMTFMLPFQFFNPLPPALIGSLPEQYMLEQGQDQSQEPKQELHGPFSDSSFLTSTPFQVEKEQCLNCPETVPQKEDSAHLSDSSSYSIASKLERTQLSPEAKVKPERNSLSAKKGRVFCTACEKTFYDKGTLKIHYNAVHLKIKHKCTIEGCNMVFSSLRSRNRHSANPNPRLHMPMNRNNRDKDLRNSLNLASSETYKRPGFTVVSPDCGPLPGYTGSVEDSKGQPAFSSIGQNGVLFPNLKTVQPVLPFYRSPATPAELANTPGMLPSLPLLSSSIPEQLVSTDMPFDALPKKKSRKSSMPIKIEKEAVEIAEEKRHSLSSDDEVPLQVVSEDEPEDSSPRSDRVPEEQHTQLSLEEPLPQGERACHLESVIESHGALSRTLEQTTLTEREAEQKVALSSVMPREVEDGGHERHFTAGLVPQIPFPDYMELQQRLLAGGLFGALSNRGMAFPFLEESKELEHLGEHALVRQKEEARFQCDICKKTFKNACSMKTHEKNTHARETHACTVEGCGAAFPSRRSRDRHSSNLSLHQKVLNEEALETSEDHFRAAYLLQDVAKEAYQDVAFTPQASQTSVIFKGTSGMGSLVYPISQVHSASLESYNSGPPSEGTILDLSTTSSMKSESSSHSSWDSDGVSEEGTALMEDSDGNCEGQSLVSGEDEYPLCVLMEKADQSLASLPSGLPITCHLCQKIYSNKGTFRAHYKTVHLRQLHKCKVPGCNTMFSSVRSRNRHSQNPNLHKSLASSPSHLQ.

Positions 210–219 (MTFMLPFQFF) are hydrophobic. C2H2-type zinc fingers lie at residues 325-348 (VFCT…NAVH) and 353-382 (HKCT…PRLH). Residues 370–393 (RNRHSANPNPRLHMPMNRNNRDKD) are disordered. The Nuclear localization signal motif lies at 501-507 (PKKKSRK). 2 positions are modified to phosphoserine: serine 505 and serine 509. The disordered stretch occupies residues 523–572 (EEKRHSLSSDDEVPLQVVSEDEPEDSSPRSDRVPEEQHTQLSLEEPLPQG). A compositionally biased stretch (acidic residues) spans 531-547 (SDDEVPLQVVSEDEPED). Over residues 548 to 560 (SSPRSDRVPEEQH) the composition is skewed to basic and acidic residues. C2H2-type zinc fingers lie at residues 687-711 (FQCD…NTHA) and 715-743 (HACT…SLHQ). The segment at 810–864 (ESYNSGPPSEGTILDLSTTSSMKSESSSHSSWDSDGVSEEGTALMEDSDGNCEGQ) is disordered. Residues 826-844 (STTSSMKSESSSHSSWDSD) show a composition bias toward low complexity. 2 C2H2-type zinc fingers span residues 895-918 (ITCH…KTVH) and 923-950 (HKCK…PNLH). Positions 937–961 (VRSRNRHSQNPNLHKSLASSPSHLQ) are disordered.

Interacts with HSF2BP (via C-terminus). In terms of processing, phosphorylation on Ser-505 and Ser-509 leads to cytoplasmic localization. As to expression, epidermis and germ cells of testis and ovary.

It localises to the nucleus. The protein resides in the cytoplasm. The protein localises to the nucleoplasm. Transcriptional activator. It is likely involved in the regulation of keratinocytes terminal differentiation in squamous epithelia and hair follicles. Required for the maintenance of spermatogenesis. It is involved in the positive regulation of oocyte maturation, probably acting through the control of BMP15 levels and regulation of AKT signaling cascade. May also play a role in the early development of embryos. The sequence is that of Zinc finger protein basonuclin-1 (Bnc1) from Mus musculus (Mouse).